A 188-amino-acid polypeptide reads, in one-letter code: Adenine phosphoribosyltransferase (188 aa).

An AMP-binding site is contributed by Ala134–Ser138.

This sequence belongs to the purine/pyrimidine phosphoribosyltransferase family. In terms of assembly, homodimer. Mg(2+) is required as a cofactor.

Its subcellular location is the cytoplasm. The protein localises to the nucleus. It carries out the reaction AMP + diphosphate = 5-phospho-alpha-D-ribose 1-diphosphate + adenine. It functions in the pathway purine metabolism; AMP biosynthesis via salvage pathway; AMP from adenine: step 1/1. Catalyzes a salvage reaction resulting in the formation of AMP, that is energically less costly than de novo synthesis. This chain is Adenine phosphoribosyltransferase (APT1), found in Candida albicans (strain SC5314 / ATCC MYA-2876) (Yeast).